A 77-amino-acid chain; its full sequence is U3-theraphotoxin-Hhn1k (77 aa).

Positions 1 to 14 (TFAGLVLLFVVCYA) are cleaved as a signal peptide. A propeptide spanning residues 15-42 (SESEEKEFPKEMLSSIFAVDNDFKQEER) is cleaved from the precursor. 2 disulfide bridges follow: Cys44–Cys57 and Cys56–Cys69.

This sequence belongs to the neurotoxin 10 (Hwtx-1) family. 51 (Hntx-8) subfamily. Hntx-8 sub-subfamily. In terms of tissue distribution, expressed by the venom gland.

The protein resides in the secreted. Functionally, ion channel inhibitor. The chain is U3-theraphotoxin-Hhn1k from Cyriopagopus hainanus (Chinese bird spider).